We begin with the raw amino-acid sequence, 1071 residues long: Carbamoyl phosphate synthase large chain (1071 aa).

Residues 1 to 399 (MPKREDIKKV…SLLKAFKSLD (399 aa)) are carboxyphosphate synthetic domain. ATP is bound by residues Arg129, Arg169, Gly175, Gly176, Glu208, Val210, Glu215, Gly241, Val242, His243, Gln284, and Glu296. In terms of domain architecture, ATP-grasp 1 spans 133-325 (KETMLRIGEK…IARVTAKIAI (193 aa)). Mg(2+) is bound by residues Gln284, Glu296, and Asn298. The Mn(2+) site is built by Gln284, Glu296, and Asn298. An oligomerization domain region spans residues 400 to 540 (IDNQLGNKHW…YSTYEDSCET (141 aa)). The carbamoyl phosphate synthetic domain stretch occupies residues 541 to 932 (NATTDKKKIL…YKAELAADNV (392 aa)). One can recognise an ATP-grasp 2 domain in the interval 673-864 (YILMKELGVP…LAKIAAKVIA (192 aa)). Residues Arg709, Asp748, Leu750, Glu755, Gly780, Val781, His782, Ser783, Gln823, and Glu835 each coordinate ATP. 3 residues coordinate Mg(2+): Gln823, Glu835, and Asn837. Mn(2+) is bound by residues Gln823, Glu835, and Asn837. Positions 931 to 1071 (NVLPLTGKVF…INEYHKEMEN (141 aa)) constitute an MGS-like domain. Residues 933–1071 (LPLTGKVFLS…INEYHKEMEN (139 aa)) form an allosteric domain region.

The protein belongs to the CarB family. Composed of two chains; the small (or glutamine) chain promotes the hydrolysis of glutamine to ammonia, which is used by the large (or ammonia) chain to synthesize carbamoyl phosphate. Tetramer of heterodimers (alpha,beta)4. Mg(2+) serves as cofactor. Requires Mn(2+) as cofactor.

It catalyses the reaction hydrogencarbonate + L-glutamine + 2 ATP + H2O = carbamoyl phosphate + L-glutamate + 2 ADP + phosphate + 2 H(+). It carries out the reaction hydrogencarbonate + NH4(+) + 2 ATP = carbamoyl phosphate + 2 ADP + phosphate + 2 H(+). It participates in amino-acid biosynthesis; L-arginine biosynthesis; carbamoyl phosphate from bicarbonate: step 1/1. It functions in the pathway pyrimidine metabolism; UMP biosynthesis via de novo pathway; (S)-dihydroorotate from bicarbonate: step 1/3. Large subunit of the glutamine-dependent carbamoyl phosphate synthetase (CPSase). CPSase catalyzes the formation of carbamoyl phosphate from the ammonia moiety of glutamine, carbonate, and phosphate donated by ATP, constituting the first step of 2 biosynthetic pathways, one leading to arginine and/or urea and the other to pyrimidine nucleotides. The large subunit (synthetase) binds the substrates ammonia (free or transferred from glutamine from the small subunit), hydrogencarbonate and ATP and carries out an ATP-coupled ligase reaction, activating hydrogencarbonate by forming carboxy phosphate which reacts with ammonia to form carbamoyl phosphate. This Methanosarcina barkeri (strain Fusaro / DSM 804) protein is Carbamoyl phosphate synthase large chain.